A 361-amino-acid chain; its full sequence is Probable dual-specificity RNA methyltransferase RlmN (361 aa).

Glu-91 (proton acceptor) is an active-site residue. A Radical SAM core domain is found at 97–329; sequence QHYGLSVCVT…KKKGGNCVVR (233 aa). Cys-104 and Cys-340 are joined by a disulfide. Residues Cys-111, Cys-115, and Cys-118 each contribute to the [4Fe-4S] cluster site. Residues 163–164, Ser-195, 218–220, and Asn-296 contribute to the S-adenosyl-L-methionine site; these read GE and SLH. Cys-340 (S-methylcysteine intermediate) is an active-site residue.

It belongs to the radical SAM superfamily. RlmN family. It depends on [4Fe-4S] cluster as a cofactor.

The protein localises to the cytoplasm. It catalyses the reaction adenosine(2503) in 23S rRNA + 2 reduced [2Fe-2S]-[ferredoxin] + 2 S-adenosyl-L-methionine = 2-methyladenosine(2503) in 23S rRNA + 5'-deoxyadenosine + L-methionine + 2 oxidized [2Fe-2S]-[ferredoxin] + S-adenosyl-L-homocysteine. It carries out the reaction adenosine(37) in tRNA + 2 reduced [2Fe-2S]-[ferredoxin] + 2 S-adenosyl-L-methionine = 2-methyladenosine(37) in tRNA + 5'-deoxyadenosine + L-methionine + 2 oxidized [2Fe-2S]-[ferredoxin] + S-adenosyl-L-homocysteine. Specifically methylates position 2 of adenine 2503 in 23S rRNA and position 2 of adenine 37 in tRNAs. In Streptococcus pneumoniae serotype 2 (strain D39 / NCTC 7466), this protein is Probable dual-specificity RNA methyltransferase RlmN.